The chain runs to 347 residues: Protein RecA (347 aa).

Residue 64–71 (GPESSGKT) participates in ATP binding.

It belongs to the RecA family.

The protein localises to the cytoplasm. Functionally, can catalyze the hydrolysis of ATP in the presence of single-stranded DNA, the ATP-dependent uptake of single-stranded DNA by duplex DNA, and the ATP-dependent hybridization of homologous single-stranded DNAs. It interacts with LexA causing its activation and leading to its autocatalytic cleavage. This Bartonella bacilliformis (strain ATCC 35685 / KC583 / Herrer 020/F12,63) protein is Protein RecA.